A 1171-amino-acid polypeptide reads, in one-letter code: Phytochrome B (1171 aa).

Over residues 1–19 (MASGSRATPTRSPSSARPA) the composition is skewed to low complexity. The segment at 1–53 (MASGSRATPTRSPSSARPAAPRHQHHHSQSSGGSTSRAGGGGGGGGGGGGGAA) is disordered. Residues 38–52 (AGGGGGGGGGGGGGA) are compositionally biased toward gly residues. Residues 259–442 (DVKLLCDTVV…AFGLQLNMEL (184 aa)) form the GAF domain. Position 364 (cysteine 364) interacts with phytochromobilin. 2 consecutive PAS domains span residues 661 to 732 (VARE…LRGD) and 795 to 866 (DYKA…MIVL). Positions 943-1161 (YIYQEIKNPL…FFHIVLELPQ (219 aa)) constitute a Histidine kinase domain.

Belongs to the phytochrome family. Homodimer. In terms of processing, contains one covalently linked phytochromobilin chromophore.

Regulatory photoreceptor which exists in two forms that are reversibly interconvertible by light: the Pr form that absorbs maximally in the red region of the spectrum and the Pfr form that absorbs maximally in the far-red region. Photoconversion of Pr to Pfr induces an array of morphogenic responses, whereas reconversion of Pfr to Pr cancels the induction of those responses. Pfr controls the expression of a number of nuclear genes including those encoding the small subunit of ribulose-bisphosphate carboxylase, chlorophyll A/B binding protein, protochlorophyllide reductase, rRNA, etc. It also controls the expression of its own gene(s) in a negative feedback fashion. The polypeptide is Phytochrome B (PHYB) (Oryza sativa subsp. indica (Rice)).